Reading from the N-terminus, the 243-residue chain is Ribonuclease HII (243 aa).

An RNase H type-2 domain is found at 23–217 (SVIVGVDEVG…LSSECEGAPP (195 aa)). A divalent metal cation contacts are provided by Asp29, Glu30, and Asp122. The interval 223-243 (LSSTGIKTPVDGRGDAVATRD) is disordered. Over residues 232 to 243 (VDGRGDAVATRD) the composition is skewed to basic and acidic residues.

It belongs to the RNase HII family. Mn(2+) serves as cofactor. It depends on Mg(2+) as a cofactor.

Its subcellular location is the cytoplasm. The catalysed reaction is Endonucleolytic cleavage to 5'-phosphomonoester.. Its function is as follows. Endonuclease that specifically degrades the RNA of RNA-DNA hybrids. This is Ribonuclease HII from Anaplasma marginale (strain St. Maries).